The chain runs to 566 residues: Phosphatidylinositol 3,4,5-trisphosphate 3-phosphatase TPTE2 (566 aa).

The next 4 helical transmembrane spans lie at 135–155, 173–193, 208–228, and 234–254; these read SFAF…LLLA, ISLA…FVEG, AIIV…IKFL, and WIHL…HLIH. The Phosphatase tensin-type domain occupies 272–448; it reads RRYTRDGFDL…GYFAQVKHLY (177 aa). The active-site Phosphocysteine intermediate is C382. A C2 tensin-type domain is found at 455–566; sequence RRILFIKRFI…ILHSFRLVFT (112 aa).

It localises to the endoplasmic reticulum membrane. The protein resides in the golgi apparatus membrane. It catalyses the reaction a 1,2-diacyl-sn-glycero-3-phospho-(1D-myo-inositol-3,4,5-trisphosphate) + H2O = a 1,2-diacyl-sn-glycero-3-phospho-(1D-myo-inositol-4,5-bisphosphate) + phosphate. Functionally, acts as a lipid phosphatase, removing the phosphate in the D3 position of the inositol ring from phosphatidylinositol 3,4,5-trisphosphate. In Macaca fascicularis (Crab-eating macaque), this protein is Phosphatidylinositol 3,4,5-trisphosphate 3-phosphatase TPTE2 (TPTE2).